The following is a 396-amino-acid chain: Phosphoglycerate kinase (396 aa).

Residues 22-24 (DLN), R37, 60-63 (HFGR), R118, and R151 each bind substrate. ATP contacts are provided by residues K201, E323, and 353–356 (GGDT).

This sequence belongs to the phosphoglycerate kinase family. In terms of assembly, monomer.

The protein localises to the cytoplasm. The catalysed reaction is (2R)-3-phosphoglycerate + ATP = (2R)-3-phospho-glyceroyl phosphate + ADP. Its pathway is carbohydrate degradation; glycolysis; pyruvate from D-glyceraldehyde 3-phosphate: step 2/5. The sequence is that of Phosphoglycerate kinase from Xanthobacter autotrophicus (strain ATCC BAA-1158 / Py2).